A 1220-amino-acid chain; its full sequence is MSQPPPPPPLPPPPPPPEAPQTSSSLAAAASPGGLSKRRDRRILSGSCPDPKCQARLFFPASGSVSIECTECGQRHEQQQLLGVEEVTDPDVVLHNLLRNALLGVTGAPKKNTELVKVMGLSNYHCKLLSPILARYGMDKQTGRAKLLRDMNQGELFDCALLGDRAFLIEPEHVNTVGYGKDRSGSLLYLHDTLEDIKRANKSQECLIPVHVDGDGHCLVHAVSRALVGRELFWHALRENLKQHFQQHLARYQALFHDFIDAAEWEDIINECDPLFVPPEGVPLGLRNIHIFGLANVLHRPIILLDSLSGMRSSGDYSATFLPGLIPAEKCTGRDGHLNKPICIAWSSSGRNHYIPLVGIKGAALPKLPMNLLPKAWGVPQDLIKKYIKLEEDGGCVIGGDRSLQDKYLLRLVAAMEEVFMDKHGIHPSLVADVHQYFYRRTGVIGVQPEEVTAAAKKAVMDNRLHKCLLYGALSELHVPSEWLAPGGKLYNLAKSTHGQLRPDKNYSFPLNNLVCSYDPVKDVLLPDYGLSNLTACNWCHGSSVRRVRGDGSIVYLDGDRTNSRSTGGKCGCGFKHFWEGKEYDNLPEAFPITLEWGGRVVRETVYWFQYESDPSLNSNVYDVAMKLVTKHFPGEFGSEILVQKVVHTILHQTAKKNPDDYTPVNIDGAHAQRVGDVQGQELESQLPTKIILTGQKTKTLHKEELNMSKTERTIQQNITEQASVMQKRKTEKLKQEQKGQPRTVSPSTIRDGPSSAPATPTKAPYSPTTSKEKKIRITTNDGRQSMVTLKPSTTFFELQESIAREFNIPPYLQCIRYGFPPKELMPPQAGMEKEPVPLQHGDRITIEILKGRAEGGPSTAAHSAHTVKQEEIAVTGKLSSKELQEQADKEMYSLCLLATLMGEDVWSYAKGLPHMFQQGGVFYNIMKKTMGMADGKHCTFPHLPGKTFVYNASEDRLELCVDAAGHFPIGPDVEDLVKEAVSQVRAEATTRSRESSPSHGLLKLGSGGVVKKKSEQLHNVTAFQGKGHSLGTASSHPHIDPRARETLAVRKHNTGTDFSNSSIKTEPPVFTAASSNSELIRIAPGVVTMRDGRQIDPDVVEAQRKKLQEMVSSIQASMDKHLRDQSAEQAPSDLSQRKVEVVSSVRPVNLQTGLPEPFSLTGGTENLNTETTDSHVADVLGAAFATRSKAQKENSMEEPEEMDSQDAETTNTTEPMDHS.

Pro residues predominate over residues 1–19; that stretch reads MSQPPPPPPLPPPPPPPEA. Positions 1-40 are disordered; the sequence is MSQPPPPPPLPPPPPPPEAPQTSSSLAAAASPGGLSKRRD. Residues 20–35 are compositionally biased toward low complexity; it reads PQTSSSLAAAASPGGL. In terms of domain architecture, OTU spans 207–360; that stretch reads LIPVHVDGDG…RNHYIPLVGI (154 aa). D215 is an active-site residue. C218 acts as the Nucleophile in catalysis. Residue H353 is part of the active site. An N6-acetyllysine modification is found at K407. Disordered regions lie at residues 724 to 778 and 988 to 1008; these read SVMQ…KIRI and EATTRSRESSPSHGLLKLGSG. Residues S746 and S756 each carry the phosphoserine modification. A compositionally biased stretch (low complexity) spans 754-770; it reads PSSAPATPTKAPYSPTT. Residue T762 is modified to Phosphothreonine. S767, S993, S997, and S1076 each carry phosphoserine. Disordered stretches follow at residues 1113 to 1140 and 1185 to 1220; these read SSIQASMDKHLRDQSAEQAPSDLSQRKV and FATRSKAQKENSMEEPEEMDSQDAETTNTTEPMDHS. A phosphoserine mark is found at S1196 and S1205. The span at 1197–1207 shows a compositional bias: acidic residues; it reads MEEPEEMDSQD. A compositionally biased stretch (polar residues) spans 1208-1220; it reads AETTNTTEPMDHS.

In terms of assembly, binds VCP and the ternary complex containing STX5A, NSFL1C and VCP. Post-translationally, phosphorylated at Ser-1205 by ATM or ATR following induction of covalent DNA-protein cross-links (DPCs).

The protein localises to the nucleus. The protein resides in the cytoplasm. It is found in the endoplasmic reticulum. It localises to the golgi apparatus. Its subcellular location is the golgi stack. It carries out the reaction Thiol-dependent hydrolysis of ester, thioester, amide, peptide and isopeptide bonds formed by the C-terminal Gly of ubiquitin (a 76-residue protein attached to proteins as an intracellular targeting signal).. In terms of biological role, deubiquitinating enzyme involved in DNA repair and reassembly of the Golgi apparatus and the endoplasmic reticulum following mitosis. Necessary for VCP-mediated reassembly of Golgi stacks after mitosis. Plays a role in VCP-mediated formation of transitional endoplasmic reticulum (tER). Mediates dissociation of the ternary complex containing STX5A, NSFL1C and VCP. Also involved in DNA repair following phosphorylation by ATM or ATR: acts by catalyzing deubiquitination of SPRTN, thereby promoting SPRTN recruitment to chromatin and subsequent proteolytic cleavage of covalent DNA-protein cross-links (DPCs). Hydrolyzes 'Lys-11'- and 'Lys-48'-linked polyubiquitin chains. The polypeptide is Deubiquitinating protein VCPIP1 (Mus musculus (Mouse)).